A 182-amino-acid polypeptide reads, in one-letter code: uncharacterized protein (182 aa).

Disordered regions lie at residues alanine 17 to lysine 53 and aspartate 128 to serine 159. The segment covering proline 42–lysine 53 has biased composition (polar residues). Residues serine 129 to serine 138 show a composition bias toward low complexity.

This is an uncharacterized protein from Homo sapiens (Human).